A 357-amino-acid chain; its full sequence is Protein RecA (357 aa).

67 to 74 (GPESSGKT) contributes to the ATP binding site. The interval 332–357 (PSAMSSSSSDDENSEGNVDFETGEVF) is disordered.

Belongs to the RecA family.

The protein resides in the cytoplasm. Its function is as follows. Can catalyze the hydrolysis of ATP in the presence of single-stranded DNA, the ATP-dependent uptake of single-stranded DNA by duplex DNA, and the ATP-dependent hybridization of homologous single-stranded DNAs. It interacts with LexA causing its activation and leading to its autocatalytic cleavage. This is Protein RecA from Shewanella sp. (strain ANA-3).